The primary structure comprises 567 residues: Urease subunit alpha (567 aa).

The Urease domain occupies 129-567 (GGIDTHIHWI…LPMAQRYFLF (439 aa)). His134, His136, and Lys217 together coordinate Ni(2+). Lys217 carries the N6-carboxylysine modification. Substrate is bound at residue His219. His246 and His272 together coordinate Ni(2+). His320 functions as the Proton donor in the catalytic mechanism. Asp360 is a binding site for Ni(2+).

It belongs to the metallo-dependent hydrolases superfamily. Urease alpha subunit family. Heterotrimer of UreA (gamma), UreB (beta) and UreC (alpha) subunits. Three heterotrimers associate to form the active enzyme. Ni cation serves as cofactor. In terms of processing, carboxylation allows a single lysine to coordinate two nickel ions.

It localises to the cytoplasm. It catalyses the reaction urea + 2 H2O + H(+) = hydrogencarbonate + 2 NH4(+). Its pathway is nitrogen metabolism; urea degradation; CO(2) and NH(3) from urea (urease route): step 1/1. This chain is Urease subunit alpha, found in Klebsiella pneumoniae (strain 342).